The primary structure comprises 88 residues: Homeobox protein knotted-1-like 1 (88 aa).

An ELK domain is found at 4–24; it reads ELKLELKQGFKSRIEDVREEI. The homeobox; TALE-type DNA-binding region spans 25–88; the sequence is LRKRRAGKLP…NQRKRNWHNN (64 aa).

Belongs to the TALE/KNOX homeobox family. Highly expressed in the roots.

The protein resides in the nucleus. This is Homeobox protein knotted-1-like 1 (KNOX1) from Zea mays (Maize).